The chain runs to 108 residues: MAKSRILKGDVVKVIAGSHKGQIGPITSITKDKQWVSVQGITVKKHVKPTNEDSEGGIKDIPAKLHISNVALQDPKNKDQVTKVGFEIINGKKVRIARKSKTQIKTAK.

This sequence belongs to the universal ribosomal protein uL24 family. As to quaternary structure, part of the 50S ribosomal subunit.

In terms of biological role, one of two assembly initiator proteins, it binds directly to the 5'-end of the 23S rRNA, where it nucleates assembly of the 50S subunit. Functionally, one of the proteins that surrounds the polypeptide exit tunnel on the outside of the subunit. This is Large ribosomal subunit protein uL24 from Mycoplasma mycoides subsp. mycoides SC (strain CCUG 32753 / NCTC 10114 / PG1).